The sequence spans 425 residues: Glycosyl hydrolase family 109 protein 2 (425 aa).

Residues 29-30 (NR), Glu51, 99-102 (WLTH), 119-120 (EV), and Asn148 each bind NAD(+). Tyr177 is a binding site for substrate. Residues 194–198 (FHNHW) and Tyr211 each bind NAD(+). Substrate is bound by residues 211-214 (YPTH) and Tyr293.

The protein belongs to the Gfo/Idh/MocA family. Glycosyl hydrolase 109 subfamily. The cofactor is NAD(+).

Its function is as follows. Glycosidase. This Bacteroides fragilis (strain YCH46) protein is Glycosyl hydrolase family 109 protein 2.